The sequence spans 288 residues: MKKLSFQQIILTLQNYWQDYGCAILQPYDAYVGAGTFHPATVLRCLGTKPWSVAYVQPSRRPGDSRYGMHPNRMQHYYQFQVILKPSPDNIQELYLKSLECLGIDLKIHDIRFVEDDWESPTLGAAGLGWEVWCNGMEVSQFTYMQQIGGIECRPVAGEITYGLERLALYIQGVDEVRELDWNGQVGEKALKYGEVDFEAEWQFSKYNLELADSEMLLRHFKDSEDQCERLIKANLPMPAYDECLKASHAFNQLNALGVISVTERASYVLRVRHLARICCTKWLEMNK.

Belongs to the class-II aminoacyl-tRNA synthetase family. In terms of assembly, tetramer of two alpha and two beta subunits.

The protein localises to the cytoplasm. The catalysed reaction is tRNA(Gly) + glycine + ATP = glycyl-tRNA(Gly) + AMP + diphosphate. This chain is Glycine--tRNA ligase alpha subunit, found in Rickettsia rickettsii (strain Iowa).